A 630-amino-acid chain; its full sequence is tRNA uridine 5-carboxymethylaminomethyl modification enzyme MnmG (630 aa).

13 to 18 (GGGHAG) contributes to the FAD binding site. 273–287 (GPRYCPSIEDKIHRF) is an NAD(+) binding site.

This sequence belongs to the MnmG family. As to quaternary structure, homodimer. Heterotetramer of two MnmE and two MnmG subunits. Requires FAD as cofactor.

The protein resides in the cytoplasm. NAD-binding protein involved in the addition of a carboxymethylaminomethyl (cmnm) group at the wobble position (U34) of certain tRNAs, forming tRNA-cmnm(5)s(2)U34. This Pseudomonas entomophila (strain L48) protein is tRNA uridine 5-carboxymethylaminomethyl modification enzyme MnmG.